We begin with the raw amino-acid sequence, 242 residues long: Type III pantothenate kinase (242 aa).

7 to 14 (DNSNTRTK) is an ATP binding site. Substrate-binding positions include tyrosine 88 and 95 to 98 (GADR). Aspartate 97 acts as the Proton acceptor in catalysis. Residue aspartate 117 participates in K(+) binding. Threonine 120 is a binding site for ATP. Threonine 172 is a binding site for substrate.

Belongs to the type III pantothenate kinase family. As to quaternary structure, homodimer. Requires NH4(+) as cofactor. K(+) serves as cofactor.

Its subcellular location is the cytoplasm. It catalyses the reaction (R)-pantothenate + ATP = (R)-4'-phosphopantothenate + ADP + H(+). Its pathway is cofactor biosynthesis; coenzyme A biosynthesis; CoA from (R)-pantothenate: step 1/5. In terms of biological role, catalyzes the phosphorylation of pantothenate (Pan), the first step in CoA biosynthesis. This is Type III pantothenate kinase from Akkermansia muciniphila (strain ATCC BAA-835 / DSM 22959 / JCM 33894 / BCRC 81048 / CCUG 64013 / CIP 107961 / Muc).